The following is a 426-amino-acid chain: 3-phosphoshikimate 1-carboxyvinyltransferase (426 aa).

3-phosphoshikimate is bound by residues K23, S24, and R28. K23 contributes to the phosphoenolpyruvate binding site. Positions 96 and 124 each coordinate phosphoenolpyruvate. T170, S171, Q172, S198, D314, and K341 together coordinate 3-phosphoshikimate. Residue Q172 participates in phosphoenolpyruvate binding. D314 acts as the Proton acceptor in catalysis. Residues R345, R386, and K411 each contribute to the phosphoenolpyruvate site.

It belongs to the EPSP synthase family. As to quaternary structure, monomer.

The protein localises to the cytoplasm. It catalyses the reaction 3-phosphoshikimate + phosphoenolpyruvate = 5-O-(1-carboxyvinyl)-3-phosphoshikimate + phosphate. It functions in the pathway metabolic intermediate biosynthesis; chorismate biosynthesis; chorismate from D-erythrose 4-phosphate and phosphoenolpyruvate: step 6/7. Its function is as follows. Catalyzes the transfer of the enolpyruvyl moiety of phosphoenolpyruvate (PEP) to the 5-hydroxyl of shikimate-3-phosphate (S3P) to produce enolpyruvyl shikimate-3-phosphate and inorganic phosphate. The protein is 3-phosphoshikimate 1-carboxyvinyltransferase of Nostoc punctiforme (strain ATCC 29133 / PCC 73102).